Reading from the N-terminus, the 91-residue chain is Small ribosomal subunit protein uS19 (91 aa).

Belongs to the universal ribosomal protein uS19 family.

Functionally, protein S19 forms a complex with S13 that binds strongly to the 16S ribosomal RNA. This Metamycoplasma arthritidis (strain 158L3-1) (Mycoplasma arthritidis) protein is Small ribosomal subunit protein uS19.